The chain runs to 126 residues: Arginine decarboxylase proenzyme (126 aa).

S74 functions as the Schiff-base intermediate with substrate; via pyruvic acid in the catalytic mechanism. Position 74 is a pyruvic acid (Ser); by autocatalysis (S74). The active-site Proton acceptor; for processing activity is the H79. The Proton donor; for catalytic activity role is filled by C94.

It belongs to the prokaryotic AdoMetDC family. Type 1 subfamily. As to quaternary structure, heterooctamer of four alpha and four beta chains arranged as a tetramer of alpha/beta heterodimers. Pyruvate serves as cofactor. In terms of processing, is synthesized initially as an inactive proenzyme. Formation of the active enzyme involves a self-maturation process in which the active site pyruvoyl group is generated from an internal serine residue via an autocatalytic post-translational modification. Two non-identical subunits are generated from the proenzyme in this reaction, and the pyruvate is formed at the N-terminus of the alpha chain, which is derived from the carboxyl end of the proenzyme. The post-translation cleavage follows an unusual pathway, termed non-hydrolytic serinolysis, in which the side chain hydroxyl group of the serine supplies its oxygen atom to form the C-terminus of the beta chain, while the remainder of the serine residue undergoes an oxidative deamination to produce ammonia and the pyruvoyl group blocking the N-terminus of the alpha chain.

The catalysed reaction is L-arginine + H(+) = agmatine + CO2. It participates in amine and polyamine biosynthesis; agmatine biosynthesis; agmatine from L-arginine: step 1/1. In terms of biological role, specifically catalyzes the decarboxylation of L-arginine to agmatine. Has no S-adenosylmethionine decarboxylase (AdoMetDC) activity. This is Arginine decarboxylase proenzyme from Pyrobaculum neutrophilum (strain DSM 2338 / JCM 9278 / NBRC 100436 / V24Sta) (Thermoproteus neutrophilus).